The chain runs to 214 residues: ATP-dependent dethiobiotin synthetase BioD (214 aa).

ATP is bound at residue 10–15; sequence GIGKTY. Threonine 14 lines the Mg(2+) pocket. Residue lysine 35 is part of the active site. Threonine 39 contributes to the substrate binding site. ATP contacts are provided by residues aspartate 44, 109-112, and 169-170; these read EGAG and NC. Mg(2+) contacts are provided by aspartate 44 and glutamate 109.

The protein belongs to the dethiobiotin synthetase family. As to quaternary structure, homodimer. Mg(2+) serves as cofactor.

It localises to the cytoplasm. The enzyme catalyses (7R,8S)-7,8-diammoniononanoate + CO2 + ATP = (4R,5S)-dethiobiotin + ADP + phosphate + 3 H(+). The protein operates within cofactor biosynthesis; biotin biosynthesis; biotin from 7,8-diaminononanoate: step 1/2. Catalyzes a mechanistically unusual reaction, the ATP-dependent insertion of CO2 between the N7 and N8 nitrogen atoms of 7,8-diaminopelargonic acid (DAPA, also called 7,8-diammoniononanoate) to form a ureido ring. The protein is ATP-dependent dethiobiotin synthetase BioD of Methanocaldococcus jannaschii (strain ATCC 43067 / DSM 2661 / JAL-1 / JCM 10045 / NBRC 100440) (Methanococcus jannaschii).